The chain runs to 286 residues: Shikimate dehydrogenase (NADP(+)) (286 aa).

Shikimate-binding positions include 19-21 (SLS) and Thr66. Residue Lys70 is the Proton acceptor of the active site. Shikimate is bound by residues Asn91 and Asp107. NADP(+)-binding positions include 129 to 133 (GSGGA) and Leu229. Tyr231 contacts shikimate. Gly252 contributes to the NADP(+) binding site.

This sequence belongs to the shikimate dehydrogenase family. In terms of assembly, homodimer.

The catalysed reaction is shikimate + NADP(+) = 3-dehydroshikimate + NADPH + H(+). It functions in the pathway metabolic intermediate biosynthesis; chorismate biosynthesis; chorismate from D-erythrose 4-phosphate and phosphoenolpyruvate: step 4/7. Functionally, involved in the biosynthesis of the chorismate, which leads to the biosynthesis of aromatic amino acids. Catalyzes the reversible NADPH linked reduction of 3-dehydroshikimate (DHSA) to yield shikimate (SA). The polypeptide is Shikimate dehydrogenase (NADP(+)) (Prochlorococcus marinus (strain MIT 9312)).